Consider the following 130-residue polypeptide: Small ribosomal subunit protein uS11 (130 aa).

This sequence belongs to the universal ribosomal protein uS11 family. In terms of assembly, part of the 30S ribosomal subunit. Interacts with proteins S7 and S18. Binds to IF-3.

Its function is as follows. Located on the platform of the 30S subunit, it bridges several disparate RNA helices of the 16S rRNA. Forms part of the Shine-Dalgarno cleft in the 70S ribosome. The chain is Small ribosomal subunit protein uS11 from Prochlorococcus marinus (strain AS9601).